The primary structure comprises 1541 residues: Multiple epidermal growth factor-like domains protein 6 (1541 aa).

The signal sequence occupies residues 1–30 (MSFLEEARAAGRAVVLALVLLLLPAVPVGA). Residues 44–125 (MPHVCAEQEL…QQPDEEGCLS (82 aa)) enclose the EMI domain. 15 cysteine pairs are disulfide-bonded: cysteine 48–cysteine 111, cysteine 77–cysteine 83, cysteine 110–cysteine 123, cysteine 128–cysteine 139, cysteine 133–cysteine 147, cysteine 149–cysteine 158, cysteine 165–cysteine 176, cysteine 172–cysteine 185, cysteine 187–cysteine 200, cysteine 242–cysteine 255, cysteine 248–cysteine 268, cysteine 270–cysteine 283, cysteine 289–cysteine 300, cysteine 296–cysteine 309, and cysteine 311–cysteine 324. The 36-residue stretch at 124-159 (LSAECSASLCFHGGRCVPGSAQPCHCPPGFQGPRCQ) folds into the EGF-like 1 domain. An EGF-like 2; calcium-binding domain is found at 161–201 (DVDECRTHNGGCQHRCVNTPGSYLCECKPGFRLHTDSRTCL). EGF-like domains follow at residues 206–242 (CALG…GRHC) and 238–284 (DGRH…KACE). Asparagine 252 is a glycosylation site (N-linked (GlcNAc...) asparagine). One can recognise an EGF-like 5; calcium-binding domain in the interval 285-325 (DVDECAAGLAQCAHGCLNTQGSFKCVCHAGYELGADGRQCY). 2 EGF-like domains span residues 335 to 370 (CEAN…QRTC) and 375 to 411 (DCAD…CGCE). One can recognise an EGF-like 8; calcium-binding domain in the interval 412-452 (DVDECASSRGGCEHHCTNLAGSFQCSCEAGYRLHEDRRGCS). Disulfide bonds link cysteine 416/cysteine 427, cysteine 423/cysteine 436, cysteine 438/cysteine 451, cysteine 520/cysteine 533, cysteine 527/cysteine 540, cysteine 542/cysteine 551, cysteine 564/cysteine 576, cysteine 570/cysteine 583, cysteine 585/cysteine 594, cysteine 607/cysteine 619, cysteine 613/cysteine 626, and cysteine 628/cysteine 637. 19 consecutive EGF-like domains span residues 516-552 (FGHD…LICN), 560-595 (FGKN…TNCE), 603-638 (YGKH…RFCH), 736-770 (FGVN…EDCE), 783-814 (QEIC…SRCQ), 822-857 (YGPS…FSCQ), 865-901 (WGPD…PRCE), 909-944 (FGPG…TFCE), 955-987 (DCRS…PRCA), 995-1030 (YGHN…PSCL), 1038-1073 (YGDN…LACE), 1081-1116 (VRAG…DKCQ), 1124-1159 (FGEA…SGCE), 1211-1246 (YGPG…TDCN), 1254-1289 (FGPN…VRCE), 1297-1332 (FGVG…RHCE), 1345-1375 (HLEC…QACE), 1383-1418 (HGAG…HFCE), and 1469-1504 (FGPS…PTCR). A glycan (N-linked (GlcNAc...) asparagine) is linked at asparagine 739. Cystine bridges form between cysteine 740–cysteine 751, cysteine 744–cysteine 758, cysteine 760–cysteine 769, cysteine 786–cysteine 795, cysteine 789–cysteine 802, cysteine 804–cysteine 813, cysteine 826–cysteine 838, cysteine 832–cysteine 845, cysteine 847–cysteine 856, cysteine 869–cysteine 882, cysteine 873–cysteine 889, cysteine 891–cysteine 900, cysteine 913–cysteine 925, cysteine 919–cysteine 932, and cysteine 934–cysteine 943. Disulfide bonds link cysteine 999–cysteine 1011, cysteine 1005–cysteine 1018, cysteine 1020–cysteine 1029, cysteine 1042–cysteine 1054, cysteine 1048–cysteine 1061, cysteine 1063–cysteine 1072, cysteine 1085–cysteine 1097, cysteine 1091–cysteine 1104, cysteine 1106–cysteine 1115, cysteine 1128–cysteine 1140, cysteine 1134–cysteine 1147, cysteine 1149–cysteine 1158, cysteine 1215–cysteine 1227, cysteine 1221–cysteine 1234, cysteine 1236–cysteine 1245, cysteine 1258–cysteine 1270, cysteine 1264–cysteine 1277, cysteine 1279–cysteine 1288, cysteine 1301–cysteine 1313, cysteine 1307–cysteine 1320, cysteine 1322–cysteine 1331, cysteine 1348–cysteine 1356, cysteine 1350–cysteine 1363, cysteine 1365–cysteine 1374, cysteine 1387–cysteine 1399, cysteine 1393–cysteine 1406, cysteine 1408–cysteine 1417, cysteine 1473–cysteine 1485, cysteine 1479–cysteine 1492, and cysteine 1494–cysteine 1503. Residues 1509–1541 (LRLPENPSLAQGSAGTLPASSRPTSRSGGPARH) are disordered. The span at 1516–1535 (SLAQGSAGTLPASSRPTSRS) shows a compositional bias: polar residues.

The protein localises to the secreted. This chain is Multiple epidermal growth factor-like domains protein 6 (MEGF6), found in Homo sapiens (Human).